A 372-amino-acid polypeptide reads, in one-letter code: MLDIQQLVKTYENGHQAVKGVDLAIHQGEFIVLVGPSGCGKSSILRSIAGLEAITSGEIHLAGRRVDNEKPANRDIAMVFQNYALYPHMSVYDNLAYGLKNRGVSKATIAEKIAKVAKTLKIEEYLDRKPAKLSGGQRQRVAMGRAIVRDPQLFLFDEPLSNLDAALRAHMRLEIKKLQRELGVTSVYVTHDQVEAMTLADRIVVLKQGEIEQIGTPAEVYHQPASTFVASFIGSPAMNFLAASISDGKLQLAGKQWSVPYDANLNCNTLTLGIRPEHASLHPVDDAIELSLNIQVVEPLGPNQLVHGKINGEYGDEDFIAVTAEMPLTIGDNLPIWVRVEQLHLFDEQEKRIPISAQSPSVDTHQQQRQQQ.

One can recognise an ABC transporter domain in the interval 2-233; that stretch reads LDIQQLVKTY…PASTFVASFI (232 aa). Position 35–42 (35–42) interacts with ATP; the sequence is GPSGCGKS.

Belongs to the ABC transporter superfamily. sn-glycerol-3-phosphate importer (TC 3.A.1.1.3) family. As to quaternary structure, the complex is composed of two ATP-binding proteins (UgpC), two transmembrane proteins (UgpA and UgpE) and a solute-binding protein (UgpB).

Its subcellular location is the cell inner membrane. It carries out the reaction sn-glycerol 3-phosphate(out) + ATP + H2O = sn-glycerol 3-phosphate(in) + ADP + phosphate + H(+). In terms of biological role, part of the ABC transporter complex UgpBAEC involved in sn-glycerol-3-phosphate (G3P) import. Responsible for energy coupling to the transport system. This Vibrio vulnificus (strain YJ016) protein is sn-glycerol-3-phosphate import ATP-binding protein UgpC.